The primary structure comprises 185 residues: Ribosome-recycling factor (185 aa).

It belongs to the RRF family.

It localises to the cytoplasm. Responsible for the release of ribosomes from messenger RNA at the termination of protein biosynthesis. May increase the efficiency of translation by recycling ribosomes from one round of translation to another. This chain is Ribosome-recycling factor, found in Alkalilimnicola ehrlichii (strain ATCC BAA-1101 / DSM 17681 / MLHE-1).